Reading from the N-terminus, the 258-residue chain is 4-hydroxy-tetrahydrodipicolinate reductase (258 aa).

Residues 8 to 13 (GVTGRM), 93 to 95 (GTT), and 117 to 120 (AANF) contribute to the NAD(+) site. The active-site Proton donor/acceptor is the H149. H150 provides a ligand contact to (S)-2,3,4,5-tetrahydrodipicolinate. The active-site Proton donor is K153. 159 to 160 (GT) contacts (S)-2,3,4,5-tetrahydrodipicolinate.

Belongs to the DapB family.

The protein localises to the cytoplasm. The catalysed reaction is (S)-2,3,4,5-tetrahydrodipicolinate + NAD(+) + H2O = (2S,4S)-4-hydroxy-2,3,4,5-tetrahydrodipicolinate + NADH + H(+). The enzyme catalyses (S)-2,3,4,5-tetrahydrodipicolinate + NADP(+) + H2O = (2S,4S)-4-hydroxy-2,3,4,5-tetrahydrodipicolinate + NADPH + H(+). Its pathway is amino-acid biosynthesis; L-lysine biosynthesis via DAP pathway; (S)-tetrahydrodipicolinate from L-aspartate: step 4/4. Catalyzes the conversion of 4-hydroxy-tetrahydrodipicolinate (HTPA) to tetrahydrodipicolinate. This is 4-hydroxy-tetrahydrodipicolinate reductase from Thermomicrobium roseum (strain ATCC 27502 / DSM 5159 / P-2).